Consider the following 589-residue polypeptide: (E)-beta-ocimene synthase, chloroplastic (589 aa).

A chloroplast-targeting transit peptide spans M1–P25. Residues R302, D339, D343, R480, and N483 each coordinate (2E,6E)-farnesyl diphosphate. Residues D339 and D343 each contribute to the Mg(2+) site. Residues D339–D343 carry the DDXXD motif motif. Mg(2+) is bound by residues N483, T487, and E491.

Belongs to the terpene synthase family. Tpsb subfamily. Requires Mg(2+) as cofactor. The cofactor is Mn(2+). As to expression, expressed exclusively in flowers.

It localises to the plastid. The protein localises to the chloroplast. The catalysed reaction is (2E,6E)-farnesyl diphosphate = (3E,6E)-alpha-farnesene + diphosphate. It functions in the pathway secondary metabolite biosynthesis; terpenoid biosynthesis. In terms of biological role, predominantly involved in monoterpene (C10) biosynthesis. Using GPP as substrate, the major product is (E)-beta-ocimene with minor amounts of (Z)-beta-ocimene and myrcene. Using FPP as substrate, could also be able to synthesize in vitro sesquiterpenes (C15) with (E,E)-alpha-farnesene as the major product and with (Z,E)-alpha-farnesene and (E,E)-beta-farnesene as minor products. This is (E)-beta-ocimene synthase, chloroplastic (TPS02) from Arabidopsis thaliana (Mouse-ear cress).